Consider the following 340-residue polypeptide: Ferrochelatase (340 aa).

Positions 189 and 292 each coordinate Fe cation.

Belongs to the ferrochelatase family.

Its subcellular location is the cytoplasm. The enzyme catalyses heme b + 2 H(+) = protoporphyrin IX + Fe(2+). It participates in porphyrin-containing compound metabolism; protoheme biosynthesis; protoheme from protoporphyrin-IX: step 1/1. Its function is as follows. Catalyzes the ferrous insertion into protoporphyrin IX. In Ectopseudomonas mendocina (strain ymp) (Pseudomonas mendocina), this protein is Ferrochelatase.